Consider the following 344-residue polypeptide: MSVVVRHDWDHKELQALFDLPFPELLHRAASVHRAHFDPAEVQVSTLLSVKTGGCPEDCAYCPQAQRYDTGVTAQKLLETEEVVAKARQAKAAGASRFCMGAAWRSPKERDIPKVAAMIREVKAMGLETCATLGMLDAGQARALKDAGLDYYNHNLDTAPDYYDTIIHTRQYQDRLNTLEHVRDVGLKTCCGGIVGMGETRDHRIGLLLALATLPAHPDSVPINQLVQVPGTPLHGTQQLDPFEFVRMIAVARIAMPKSMVRLSAGREAMSDELQALCFLAGANSIFYGEKLLTTGNPDTERDQTLFQRLGLRPMQITVDAAEHDHPATVHAEITRSAACEHTA.

A Radical SAM core domain is found at 40 to 267 (AEVQVSTLLS…KSMVRLSAGR (228 aa)). The [4Fe-4S] cluster site is built by Cys55, Cys59, and Cys62. [2Fe-2S] cluster-binding residues include Cys99, Cys130, Cys190, and Arg262.

The protein belongs to the radical SAM superfamily. Biotin synthase family. Homodimer. It depends on [4Fe-4S] cluster as a cofactor. [2Fe-2S] cluster serves as cofactor.

The enzyme catalyses (4R,5S)-dethiobiotin + (sulfur carrier)-SH + 2 reduced [2Fe-2S]-[ferredoxin] + 2 S-adenosyl-L-methionine = (sulfur carrier)-H + biotin + 2 5'-deoxyadenosine + 2 L-methionine + 2 oxidized [2Fe-2S]-[ferredoxin]. It participates in cofactor biosynthesis; biotin biosynthesis; biotin from 7,8-diaminononanoate: step 2/2. Catalyzes the conversion of dethiobiotin (DTB) to biotin by the insertion of a sulfur atom into dethiobiotin via a radical-based mechanism. This Xanthomonas oryzae pv. oryzae (strain PXO99A) protein is Biotin synthase.